A 242-amino-acid polypeptide reads, in one-letter code: Caspase-14 (242 aa).

Residues 1 to 5 (MSNPR) constitute a propeptide that is removed on maturation. Catalysis depends on residues histidine 89 and cysteine 132. Positions 147–152 (EIVMVI) are excised as a propeptide.

It belongs to the peptidase C14A family. Heterodimer of a large and a small subunit, both processed from the precursor; the mature active form is a p17/p10 dimer and the intermediate form a p20/p8 dimer. In terms of processing, maturation by proteolytic processing appears to be a two-step process. The precursor is processed by KLK7 to yield the p20/p8 intermediate form which acts on the precursor to yield the p17/p10 mature form. Initially, cleavage between Ile-152 and Lys-153 has been proposed to yield the large and small subunits of the active enzyme. As to expression, expressed in keratinocytes of adult skin suprabasal layers (from spinous layers to the stratum granulosum and stratum corneum) (at protein level). Expressed in keratinocytes of hair shaft and sebaceous glands (at protein level). In psoriatic skin only expressed at very low levels. The p17/10 mature form is expressed in epidermis stratum corneum, the p20/p8 intermediate form in epidermis upper granular cells of the stratum granulosum.

It localises to the cytoplasm. The protein localises to the nucleus. With respect to regulation, inhibited by caspase-1 inhibitor YVAD-FMK and the pan-caspase inhibitor VAD-FMK. Functionally, non-apoptotic caspase involved in epidermal differentiation. Is the predominant caspase in epidermal stratum corneum. Seems to play a role in keratinocyte differentiation and is required for cornification. Regulates maturation of the epidermis by proteolytically processing filaggrin. In vitro has a preference for the substrate [WY]-X-X-D motif and is active on the synthetic caspase substrate WEHD-ACF. Involved in processing of prosaposin in the epidermis. May be involved in retinal pigment epithelium cell barrier function. Involved in DNA degradation in differentiated keratinocytes probably by cleaving DFFA/ICAD leading to liberation of DFFB/CAD. This Homo sapiens (Human) protein is Caspase-14 (CASP14).